Consider the following 435-residue polypeptide: Methionine aminopeptidase 2-2 (435 aa).

A disordered region spans residues methionine 1 to asparagine 92. Positions aspartate 24–alanine 33 are enriched in low complexity. The span at glycine 34–aspartate 45 shows a compositional bias: acidic residues. Positions alanine 59–glycine 73 are enriched in basic residues. Histidine 197 is a substrate binding site. The a divalent metal cation site is built by aspartate 217, aspartate 228, and histidine 297. Histidine 305 lines the substrate pocket. A divalent metal cation contacts are provided by glutamate 330 and glutamate 425.

The protein belongs to the peptidase M24A family. Methionine aminopeptidase eukaryotic type 2 subfamily. Co(2+) serves as cofactor. Requires Zn(2+) as cofactor. Mn(2+) is required as a cofactor. The cofactor is Fe(2+).

It is found in the cytoplasm. It carries out the reaction Release of N-terminal amino acids, preferentially methionine, from peptides and arylamides.. Its function is as follows. Cotranslationally removes the N-terminal methionine from nascent proteins. The N-terminal methionine is often cleaved when the second residue in the primary sequence is small and uncharged (Met-Ala-, Cys, Gly, Pro, Ser, Thr, or Val). This is Methionine aminopeptidase 2-2 from Aspergillus clavatus (strain ATCC 1007 / CBS 513.65 / DSM 816 / NCTC 3887 / NRRL 1 / QM 1276 / 107).